The primary structure comprises 136 residues: Protein NrdI (136 aa).

It belongs to the NrdI family.

Its function is as follows. Probably involved in ribonucleotide reductase function. The polypeptide is Protein NrdI (Enterobacter sp. (strain 638)).